The chain runs to 523 residues: MSEDKITGTLAFTVFTAVLSSFQFGYDIGVINAPQEVIISHYRHVLGVPLDDRKAAINYDVNGTDTPLTVTPAYTTPAPWDEEETEGSAHIVTMLWSLSVSSFAVGGMVASFFGGWLGDKLGRIKAMLAANSLSLTGALLMGCSKFGPAHALIIAGRSVSGLYCGLISGLVPMYIGEIAPTTLRGALGTLHQLALVTGILISQIAGLSFILGNQDHWHILLGLSAVPALLQCLLLLFCPESPRYLYIKLEEEVRAKKSLKRLRGTEDVTKDINEMKKEKEEASTEQKVSVIQLFTDANYRQPILVALMLHMAQQFSGINGIFYYSTSIFQTAGISQPVYATIGVGAINMIFTAVSVLLVEKAGRRTLFLTGMIGMFFCTIFMSVGLVLLDKFAWMSYVSMTAIFLFVSFFEIGPGPIPWFMVAEFFSQGPRPTALALAAFSNWVCNFVIALCFQYIADFLGPYVFFLFAGVVLVFTLFTFFKVPETKGKSFEEIAAEFRKKSGSAPPRKAAVQMEFLASSESV.

Residues 1–10 (MSEDKITGTL) are Cytoplasmic-facing. A helical membrane pass occupies residues 11 to 31 (AFTVFTAVLSSFQFGYDIGVI). Residues 32–97 (NAPQEVIISH…SAHIVTMLWS (66 aa)) lie on the Extracellular side of the membrane. N62 carries N-linked (GlcNAc...) asparagine glycosylation. A helical membrane pass occupies residues 98–118 (LSVSSFAVGGMVASFFGGWLG). The Cytoplasmic segment spans residues 119 to 126 (DKLGRIKA). Residues 127–147 (MLAANSLSLTGALLMGCSKFG) form a helical membrane-spanning segment. The Extracellular portion of the chain corresponds to 148–157 (PAHALIIAGR). A helical membrane pass occupies residues 158–178 (SVSGLYCGLISGLVPMYIGEI). Residues 179-186 (APTTLRGA) are Cytoplasmic-facing. The chain crosses the membrane as a helical span at residues 187–207 (LGTLHQLALVTGILISQIAGL). D-glucose is bound at residue Q192. Over 208 to 216 (SFILGNQDH) the chain is Extracellular. The chain crosses the membrane as a helical span at residues 217 to 237 (WHILLGLSAVPALLQCLLLLF). The Cytoplasmic segment spans residues 238-302 (CPESPRYLYI…LFTDANYRQP (65 aa)). Residues 303-323 (ILVALMLHMAQQFSGINGIFY) form a helical membrane-spanning segment. Residues 313-314 (QQ) and N319 each bind D-glucose. The Extracellular segment spans residues 324-337 (YSTSIFQTAGISQP). A helical membrane pass occupies residues 338-358 (VYATIGVGAINMIFTAVSVLL). N348 is a binding site for D-glucose. Residues 359–367 (VEKAGRRTL) lie on the Cytoplasmic side of the membrane. The chain crosses the membrane as a helical span at residues 368 to 388 (FLTGMIGMFFCTIFMSVGLVL). Residues 389 to 401 (LDKFAWMSYVSMT) lie on the Extracellular side of the membrane. The helical transmembrane segment at 402–422 (AIFLFVSFFEIGPGPIPWFMV) threads the bilayer. Residues E411 and W419 each contribute to the D-glucose site. Over 423–432 (AEFFSQGPRP) the chain is Cytoplasmic. Residues 433–453 (TALALAAFSNWVCNFVIALCF) form a helical membrane-spanning segment. The Extracellular portion of the chain corresponds to 454-460 (QYIADFL). A helical membrane pass occupies residues 461-481 (GPYVFFLFAGVVLVFTLFTFF). The Cytoplasmic portion of the chain corresponds to 482-523 (KVPETKGKSFEEIAAEFRKKSGSAPPRKAAVQMEFLASSESV). S522 is subject to Phosphoserine.

Belongs to the major facilitator superfamily. Sugar transporter (TC 2.A.1.1) family. Glucose transporter subfamily. In terms of processing, N-glycosylated; required for stability and retention at the cell surface of pancreatic beta cells. In terms of tissue distribution, in embryo, expressed in endoderm layer of yolk sac and liver primordium.

The protein localises to the cell membrane. The catalysed reaction is D-glucose(out) = D-glucose(in). It carries out the reaction D-fructose(out) = D-fructose(in). It catalyses the reaction L-dehydroascorbate(out) = L-dehydroascorbate(in). The enzyme catalyses D-galactose(in) = D-galactose(out). D-glucose and maltose competitively inhibit fructose transport. D-glucose, D-fructose and maltose inhibit deoxyglucose transport. Functionally, facilitative hexose transporter that mediates the transport of glucose, fructose and galactose. Likely mediates the bidirectional transfer of glucose across the plasma membrane of hepatocytes and is responsible for uptake of glucose by the beta cells; may comprise part of the glucose-sensing mechanism of the beta cell. May also participate with the Na(+)/glucose cotransporter in the transcellular transport of glucose in the small intestine and kidney. Also able to mediate the transport of dehydroascorbate. This is Solute carrier family 2, facilitated glucose transporter member 2 from Mus musculus (Mouse).